The following is a 1352-amino-acid chain: Ubiquitin carboxyl-terminal hydrolase 31 (1352 aa).

Low complexity predominate over residues 1 to 16 (MSKVTAPGSGPPAAAS). 2 disordered regions span residues 1–62 (MSKV…RSVG) and 79–119 (SSEG…PPAC). Over residues 32 to 43 (RAGGGGAGGPGA) the composition is skewed to gly residues. Residues 44-62 (SGPAAPSSPSSPSSARSVG) are compositionally biased toward low complexity. Positions 95-117 (PPGPAAAPTPPPCPPPPASPAPP) are enriched in pro residues. The 638-residue stretch at 128-765 (AGLRNHGNTC…TAYILFYQRR (638 aa)) folds into the USP domain. Residue C137 is the Nucleophile of the active site. A disordered region spans residues 162–185 (RAGRPEPSPDPEQPAGRGAQGQGE). The active-site Proton acceptor is H723. Disordered regions lie at residues 812–835 (LASLSESVEMTGERSEDDGGFSTR), 919–939 (SSSYQEPSDSHSRREHKAVGR), and 951–1352 (DESD…QKPQ). Positions 958–970 (LNSSVVDTQSKHS) are enriched in polar residues. Composition is skewed to low complexity over residues 992-1001 (VDQSDSVDSS), 1051-1070 (SSLSSTSPSSPLPVKVSLKP), 1078-1089 (DSSSRGSGRHSS), and 1101-1138 (PKSQDSVSSPSPQKQKSASALTYTASSTSAKKASGPAT). Residues 1148–1159 (RTSDHSLSREGS) show a composition bias toward basic and acidic residues. A compositionally biased stretch (polar residues) spans 1160-1181 (RQSLGSDRASATSTSKPNSPRV). Residues 1198–1210 (SSSMASLRSPSTS) are compositionally biased toward low complexity. 2 stretches are compositionally biased toward basic and acidic residues: residues 1215-1225 (LKRDSKSEDKG) and 1234-1243 (RQKETRRSTD). The span at 1251–1264 (SKKAGGSSVKSVCK) shows a compositional bias: low complexity. K1264 is subject to N6-acetyllysine. Polar residues-rich tracts occupy residues 1278–1290 (PASQQPNANTTGK) and 1341–1352 (MQTSARPSQKPQ).

This sequence belongs to the peptidase C19 family. In terms of processing, acetylated at Lys-1264. Acetylation decreases activity. Deacetylated by SIRT1. In terms of tissue distribution, widely expressed.

It catalyses the reaction Thiol-dependent hydrolysis of ester, thioester, amide, peptide and isopeptide bonds formed by the C-terminal Gly of ubiquitin (a 76-residue protein attached to proteins as an intracellular targeting signal).. Its function is as follows. Deubiquitinase that recognizes and hydrolyzes the peptide bond at the C-terminal Gly of ubiquitin. May play a role in the regulation of NF-kappa-B signaling pathway by deubiquitinating TRAF2. In terms of biological role, (Microbial infection) Plays a positive role in foot-and-mouth disease and classical swine fever viral infection. Mechanistically, associates with internal ribosomal entry site (IRES) element within the 5'-untranslated region of viral genomes to promote translation of the virus-encoded polyprotein. This is Ubiquitin carboxyl-terminal hydrolase 31 (USP31) from Homo sapiens (Human).